The sequence spans 666 residues: DNA ligase (666 aa).

NAD(+)-binding positions include 31–35, 80–81, and glutamate 110; these read DKEFD and SL. Lysine 112 (N6-AMP-lysine intermediate) is an active-site residue. Positions 133, 170, 285, and 309 each coordinate NAD(+). Zn(2+) contacts are provided by cysteine 404, cysteine 407, cysteine 422, and cysteine 428. The region spanning 588–666 is the BRCT domain; that stretch reads GYTDKLAGQS…SEDEFLKLIS (79 aa).

The protein belongs to the NAD-dependent DNA ligase family. LigA subfamily. It depends on Mg(2+) as a cofactor. Requires Mn(2+) as cofactor.

The enzyme catalyses NAD(+) + (deoxyribonucleotide)n-3'-hydroxyl + 5'-phospho-(deoxyribonucleotide)m = (deoxyribonucleotide)n+m + AMP + beta-nicotinamide D-nucleotide.. Its function is as follows. DNA ligase that catalyzes the formation of phosphodiester linkages between 5'-phosphoryl and 3'-hydroxyl groups in double-stranded DNA using NAD as a coenzyme and as the energy source for the reaction. It is essential for DNA replication and repair of damaged DNA. This chain is DNA ligase, found in Bacteroides thetaiotaomicron (strain ATCC 29148 / DSM 2079 / JCM 5827 / CCUG 10774 / NCTC 10582 / VPI-5482 / E50).